An 839-amino-acid polypeptide reads, in one-letter code: RNA-directed RNA polymerase (839 aa).

Positions 504–619 (PVCVGLDASR…IMDQEHLAKF (116 aa)) constitute a RdRp catalytic domain.

It catalyses the reaction RNA(n) + a ribonucleoside 5'-triphosphate = RNA(n+1) + diphosphate. RNA-dependent RNA polymerase replicates the viral genome. This Groundnut rosette virus (strain MC1) (GRV) protein is RNA-directed RNA polymerase.